We begin with the raw amino-acid sequence, 334 residues long: 4-hydroxy-2-methyl-3-oxo-4-farnesyl-3,4-dihydroquinoline-1-oxide ketoreductase (334 aa).

Catalysis depends on Tyr-139, which acts as the Proton donor.

The protein belongs to the 3-beta-HSD family.

The enzyme catalyses aurachin B + NAD(+) + H2O = 4-hydroxy-2-methyl-3-oxo-4-[(2E,6E)-farnesyl]-3,4-dihydroquinoline 1-oxide + NADH. The catalysed reaction is 3,4-dihydroxy-2-methyl-4-[(2E,6E)-farnesyl]-3,4-dihydroquinoline 1-oxide + NAD(+) = 4-hydroxy-2-methyl-3-oxo-4-[(2E,6E)-farnesyl]-3,4-dihydroquinoline 1-oxide + NADH + H(+). Its function is as follows. Ketoreductase that catalyzes the final step in the conversion of aurachin C to aurachin B. Catalyzes the reduction of 4-hydroxy-2-methyl-3-oxo-4-[(2E,6E)-farnesyl]-3,4-dihydroquinoline-1-oxide to form 3,4-dihydroxy-2-methyl-4-[(2E,6E)-farnesyl]-3,4-dihydroquinoline 1-oxide, which then undergoes a spontaneous dehydration to form aurachin B. Accepts both NADH and NADPH, but has a preference for NADH. In Stigmatella aurantiaca, this protein is 4-hydroxy-2-methyl-3-oxo-4-farnesyl-3,4-dihydroquinoline-1-oxide ketoreductase.